We begin with the raw amino-acid sequence, 317 residues long: Enoyl-CoA delta isomerase 3, peroxisomal (317 aa).

The 46-residue stretch at 1-46 (MPKPGVFNFVNKATWDARNALGSLPKETARKNYVDLVSSLSSSSEA) folds into the ACB domain. Residues 40 to 60 (LSSSSEAPSQGKRGADEKARE) form a disordered region. 120-124 (SGNDL) is a binding site for substrate. A Microbody targeting signal motif is present at residues 315 to 317 (AKL).

The protein belongs to the enoyl-CoA hydratase/isomerase family. In terms of tissue distribution, expressed at high levels in the kidney. Also detected at very low levels in the duodenum, jejunum, ileum, heart, liver, lung, and brown adipose tissue (at protein level). In the kidney, expression seems to be localized mainly to the proximal tubule.

The protein resides in the peroxisome. The catalysed reaction is a (3Z)-enoyl-CoA = a 4-saturated (2E)-enoyl-CoA. It carries out the reaction a (3E)-enoyl-CoA = a 4-saturated (2E)-enoyl-CoA. It catalyses the reaction (3E)-nonenoyl-CoA = (2E)-nonenoyl-CoA. Functionally, catalyzes the isomerization of trans-3-nonenoyl-CoA into trans-2-nonenoyl-CoA. May also have activity towards other enoyl-CoA species. The polypeptide is Enoyl-CoA delta isomerase 3, peroxisomal (Mus musculus (Mouse)).